The chain runs to 204 residues: Ribosome maturation factor RimP (204 aa).

It belongs to the RimP family.

Its subcellular location is the cytoplasm. In terms of biological role, required for maturation of 30S ribosomal subunits. This Allorhizobium ampelinum (strain ATCC BAA-846 / DSM 112012 / S4) (Agrobacterium vitis (strain S4)) protein is Ribosome maturation factor RimP.